Consider the following 752-residue polypeptide: Catalase-peroxidase (752 aa).

The tract at residues 1-21 (MSNESKCPFHQTAGGGTTNRD) is disordered. The tryptophyl-tyrosyl-methioninium (Trp-Tyr) (with M-271) cross-link spans 91-245 (WHSAGTYRIG…LAAVQMGLIY (155 aa)). The active-site Proton acceptor is the His-92. Residues 204–228 (QAPGQGDLVAEPAKHGEEQNRDLSA) form a disordered region. The segment covering 215 to 228 (PAKHGEEQNRDLSA) has biased composition (basic and acidic residues). The segment at residues 245–271 (YVNPEGPEGNPDPVASGKDIRETFGRM) is a cross-link (tryptophyl-tyrosyl-methioninium (Tyr-Met) (with W-91)). His-286 provides a ligand contact to heme. The interval 366–391 (AHQWQPKEGKGAGTVPDAHDPSKRHA) is disordered.

It belongs to the peroxidase family. Peroxidase/catalase subfamily. Homodimer or homotetramer. The cofactor is heme b. Formation of the three residue Trp-Tyr-Met cross-link is important for the catalase, but not the peroxidase activity of the enzyme.

It carries out the reaction H2O2 + AH2 = A + 2 H2O. The enzyme catalyses 2 H2O2 = O2 + 2 H2O. Its function is as follows. Bifunctional enzyme with both catalase and broad-spectrum peroxidase activity. The sequence is that of Catalase-peroxidase from Pseudomonas putida (strain W619).